The primary structure comprises 66 residues: Muscarinic toxin 1 (66 aa).

Cystine bridges form between Cys-3–Cys-24, Cys-17–Cys-42, Cys-46–Cys-58, and Cys-59–Cys-64.

It belongs to the three-finger toxin family. Short-chain subfamily. Aminergic toxin sub-subfamily. In terms of tissue distribution, expressed by the venom gland.

The protein localises to the secreted. In terms of biological role, shows a non-competitive interaction with adrenergic and muscarinic receptors. Binds to alpha-2b (ADRA2B) (IC(50)=2.3 nM), alpha-1a (ADRA1A), alpha-1b (ADRA1B), and alpha-2c (ADRA2C) adrenergic receptors. Reversibly binds to M1 (CHRM1) muscarinic acetylcholine receptors, probably by interacting with the orthosteric site. Also reveals a slightly weaker effect at M3 (CHRM3) and M4 (CHRM4) receptors. The order of potency is ADRA2B&gt;&gt;CHRM1&gt;ADRA1A&gt;ADRA1B&gt;ADRA2C/CHRM4. This chain is Muscarinic toxin 1, found in Dendroaspis angusticeps (Eastern green mamba).